Reading from the N-terminus, the 334-residue chain is Glycerol-3-phosphate dehydrogenase [NAD(P)+] (334 aa).

Residues tryptophan 13, arginine 33, and lysine 106 each contribute to the NADPH site. 3 residues coordinate sn-glycerol 3-phosphate: lysine 106, glycine 137, and serine 139. Residue alanine 141 participates in NADPH binding. Sn-glycerol 3-phosphate contacts are provided by lysine 192, aspartate 245, serine 255, arginine 256, and asparagine 257. Lysine 192 serves as the catalytic Proton acceptor. Residue arginine 256 coordinates NADPH. 2 residues coordinate NADPH: valine 280 and glutamate 282.

It belongs to the NAD-dependent glycerol-3-phosphate dehydrogenase family.

Its subcellular location is the cytoplasm. It catalyses the reaction sn-glycerol 3-phosphate + NAD(+) = dihydroxyacetone phosphate + NADH + H(+). The catalysed reaction is sn-glycerol 3-phosphate + NADP(+) = dihydroxyacetone phosphate + NADPH + H(+). It participates in membrane lipid metabolism; glycerophospholipid metabolism. Functionally, catalyzes the reduction of the glycolytic intermediate dihydroxyacetone phosphate (DHAP) to sn-glycerol 3-phosphate (G3P), the key precursor for phospholipid synthesis. The protein is Glycerol-3-phosphate dehydrogenase [NAD(P)+] of Chlamydia caviae (strain ATCC VR-813 / DSM 19441 / 03DC25 / GPIC) (Chlamydophila caviae).